The primary structure comprises 655 residues: p-hydroxybenzoic acid efflux pump subunit AaeB (655 aa).

11 consecutive transmembrane segments (helical) span residues 13–33 (FAVK…HFQL), 38–58 (WAVL…GGEP), 69–89 (LRII…ILMI), 93–113 (LLMV…SSLV), 121–141 (WGLA…EPLL), 152–172 (EIVI…PRSI), 370–390 (LFWL…IAVV), 407–427 (FLYG…VILP), 431–451 (QSML…GIEV), 459–479 (LGAL…TFHF), and 482–502 (FLDS…VILL).

This sequence belongs to the aromatic acid exporter ArAE (TC 2.A.85) family.

Its subcellular location is the cell inner membrane. In terms of biological role, forms an efflux pump with AaeA. Could function as a metabolic relief valve, allowing to eliminate certain compounds when they accumulate to high levels in the cell. This chain is p-hydroxybenzoic acid efflux pump subunit AaeB, found in Enterobacter cloacae subsp. cloacae (strain ATCC 13047 / DSM 30054 / NBRC 13535 / NCTC 10005 / WDCM 00083 / NCDC 279-56).